Reading from the N-terminus, the 32-residue chain is MSDIN-like toxin proprotein 11 (32 aa).

Residues 1-10 (MSDINATRLP) constitute a propeptide that is removed on maturation. The disordered stretch occupies residues 1 to 32 (MSDINATRLPGMEPPSPMPCVGDADNFTLTRG). Positions 11–19 (GMEPPSPMP) form a cross-link, cyclopeptide (Gly-Pro). The propeptide occupies 20-32 (CVGDADNFTLTRG).

The protein belongs to the MSDIN fungal toxin family. In terms of processing, processed by the macrocyclase-peptidase enzyme POPB to yield a toxic cyclic nonapeptide. POPB first removes 10 residues from the N-terminus. Conformational trapping of the remaining peptide forces the enzyme to release this intermediate rather than proceed to macrocyclization. The enzyme rebinds the remaining peptide in a different conformation and catalyzes macrocyclization of the N-terminal 9 residues.

Probable toxin that belongs to the MSDIN-like toxin family responsible for a large number of food poisoning cases and deaths. The polypeptide is MSDIN-like toxin proprotein 11 (Amanita bisporigera (Destroying angel)).